The following is a 214-amino-acid chain: MTIAHKDFLPSDWHEDDSASEAASRNGLDPMMDAVRTLLVGVGEDPERNGLERTPKRVAEALKFLTKGYGQSLEELLNGAIFDLGHDELVLVRDIDLFSMCEHHMLPFIGRAHVGYIPDQKVVGLSKLARIVEMYARRLQVQERLTRQIAEALQEVLQPRGVAVVIEASHMCMVMRGVQKPNSWTVTSSMVGVFKESQSTRQEFLDLIHHKATF.

Zn(2+) is bound by residues Cys101, His104, and Cys172.

Belongs to the GTP cyclohydrolase I family. In terms of assembly, toroid-shaped homodecamer, composed of two pentamers of five dimers.

It carries out the reaction GTP + H2O = 7,8-dihydroneopterin 3'-triphosphate + formate + H(+). The protein operates within cofactor biosynthesis; 7,8-dihydroneopterin triphosphate biosynthesis; 7,8-dihydroneopterin triphosphate from GTP: step 1/1. In Gloeobacter violaceus (strain ATCC 29082 / PCC 7421), this protein is GTP cyclohydrolase 1.